The chain runs to 288 residues: Acidic endochitinase SP2 (288 aa).

Positions 1-27 are cleaved as a signal peptide; sequence MTLLLKNTLYLALIISVISSFPTSLFA. Position 28 is a pyrrolidone carboxylic acid (Gln-28). Positions 28 to 63 constitute a Chitin-binding type-1 domain; that stretch reads QNCGCAPNLCCSNFGFCGTGTPYCGVGNCQSGPCEG. Disulfide bonds link Cys-30-Cys-38, Cys-32-Cys-44, Cys-37-Cys-51, and Cys-56-Cys-61. Over residues 64-78 the composition is skewed to low complexity; that stretch reads GTPTTPTTPTTPTTP. Residues 64 to 84 form a disordered region; the sequence is GTPTTPTTPTTPTTPGTGGGG. Residues 64–85 are hinge region (Gly/Pro/Thr-rich); that stretch reads GTPTTPTTPTTPTTPGTGGGGS. 4 positions are modified to 4-hydroxyproline: Pro-66, Pro-69, Pro-72, and Pro-75. Repeat copies occupy residues 67 to 69, 70 to 72, 73 to 75, and 76 to 78. The segment at 67-78 is 4 X 3 AA tandem repeats of T-T-P; that stretch reads TTPTTPTTPTTP. The catalytic stretch occupies residues 86 to 288; the sequence is SVSDIVSQAF…GVAPGDNLTC (203 aa). Disulfide bonds link Cys-107/Cys-154, Cys-168/Cys-178, and Cys-256/Cys-288. The active-site Proton donor is the Glu-149.

The protein belongs to the glycosyl hydrolase 19 family. Chitinase class I subfamily. O-glycosylated on hydroxyprolines; contains xylose. Localized to infected area.

Its subcellular location is the secreted. The protein resides in the extracellular space. It carries out the reaction Random endo-hydrolysis of N-acetyl-beta-D-glucosaminide (1-&gt;4)-beta-linkages in chitin and chitodextrins.. In terms of biological role, defense against chitin-containing fungal pathogens. The protein is Acidic endochitinase SP2 (SP2) of Beta vulgaris (Sugar beet).